The following is a 754-amino-acid chain: Condensin complex subunit 2 (754 aa).

The segment at 104-149 (LAQRKTNGASNGDDSNGGNGEGLGGDSDEANIEIDPLTGMPISNDP) is disordered. Residues 118-128 (SNGGNGEGLGG) are compositionally biased toward gly residues. S245 carries the post-translational modification Phosphoserine. Residues 359 to 379 (CYPDENHDNTSHDEQDDDNVN) are disordered. The segment covering 362 to 371 (DENHDNTSHD) has biased composition (basic and acidic residues). The residue at position 548 (S548) is a Phosphoserine. The interval 665–688 (HDSRKNREQSSNDSETHTEDESTK) is disordered.

This sequence belongs to the CND2 (condensin subunit 2) family. Component of the condensin complex, which contains the SMC2 and SMC4 heterodimer, and three non SMC subunits that probably regulate the complex: BRN1, YCS4 and YCG1/YCS5.

The protein resides in the nucleus. Its subcellular location is the cytoplasm. The protein localises to the chromosome. In terms of biological role, regulatory subunit of the condensin complex, a complex required for conversion of interphase chromatin into mitotic-like condense chromosomes. The condensin complex probably introduces positive supercoils into relaxed DNA in the presence of type I topoisomerases and converts nicked DNA into positive knotted forms in the presence of type II topoisomerases. The condensin complex probably also plays a role during interphase. This chain is Condensin complex subunit 2 (BRN1), found in Saccharomyces cerevisiae (strain ATCC 204508 / S288c) (Baker's yeast).